Here is a 1423-residue protein sequence, read N- to C-terminus: Protein phosphatase Slingshot homolog 2 (1423 aa).

Residues 1–37 form a disordered region; sequence MALVTVQRSPTPSTTSSPCASEADSGEEECRSQPRSI. Positions 9–18 are enriched in low complexity; that stretch reads SPTPSTTSSP. Residues Ser17, Ser25, and Ser36 each carry the phosphoserine modification. A DEK-C domain is found at 248-303; the sequence is ERTERLIKTKLREIMMQKDLENITSKEIRTELEMQMVCNLREFKEFIDNEMIVILG. One can recognise a Tyrosine-protein phosphatase domain in the interval 307–448; that stretch reads SPTQIFEHVF…LEEYQGILLA (142 aa). Cys392 (phosphocysteine intermediate) is an active-site residue. Phosphoserine is present on residues Ser461, Ser487, Ser534, Ser631, and Ser633. Disordered regions lie at residues 617 to 641, 664 to 684, 696 to 728, 797 to 825, 840 to 862, 877 to 954, 962 to 981, 1019 to 1041, 1070 to 1108, and 1144 to 1179; these read TSPL…CQTE, QETR…GGRN, PSKV…QSKA, ENKP…MCNP, EGEP…AKWY, LRQE…NATV, FDHL…TQQE, TSPN…EQGL, SLHP…SSLS, and TEQS…YKDS. Over residues 621–635 the composition is skewed to pro residues; the sequence is KDPPMSPDPESPSPQ. The span at 664–680 shows a compositional bias: basic and acidic residues; sequence QETRSRSFSHSRMEELG. Residues 889–904 are compositionally biased toward polar residues; the sequence is TCTSLSTRKNSKNDSS. The span at 910–932 shows a compositional bias: basic and acidic residues; it reads PKGKSDEAPPEHSFVLKEPEMSK. Polar residues predominate over residues 941-953; it reads EAGSLSHSEQNAT. Residues 1019–1034 are compositionally biased toward polar residues; sequence TSPNHTGPGSEIATSE. The segment covering 1144-1172 has biased composition (polar residues); that stretch reads TEQSSTTDEPSAEQVSWEESQESPLSSGS. Ser1217 is subject to Phosphoserine. Position 1422 is a phosphothreonine (Thr1422).

This sequence belongs to the protein-tyrosine phosphatase family. In terms of assembly, interacts with filamentous actin.

It localises to the cytoplasm. Its subcellular location is the cytoskeleton. The protein localises to the cell junction. The protein resides in the focal adhesion. It is found in the cytoplasmic vesicle. It localises to the secretory vesicle. Its subcellular location is the acrosome. It carries out the reaction O-phospho-L-tyrosyl-[protein] + H2O = L-tyrosyl-[protein] + phosphate. The enzyme catalyses O-phospho-L-seryl-[protein] + H2O = L-seryl-[protein] + phosphate. It catalyses the reaction O-phospho-L-threonyl-[protein] + H2O = L-threonyl-[protein] + phosphate. Protein phosphatase which regulates actin filament dynamics. Dephosphorylates and activates the actin binding/depolymerizing factor cofilin, which subsequently binds to actin filaments and stimulates their disassembly. Inhibitory phosphorylation of cofilin is mediated by LIMK1, which may also be dephosphorylated and inactivated by this protein. Required for spermatogenesis. Involved in acrosome biogenesis, probably by regulating cofilin-mediated actin cytoskeleton remodeling during proacrosomal vesicle fusion and/or Golgi to perinuclear vesicle trafficking. The protein is Protein phosphatase Slingshot homolog 2 (SSH2) of Homo sapiens (Human).